The chain runs to 745 residues: Polyribonucleotide nucleotidyltransferase (745 aa).

The Mg(2+) site is built by Asp487 and Asp493. Residues 554–613 (PRIETMQIPTDKIRDVIGTGGKIIREIVEKTGAKINIEDTGIVKIASSDGKAIKAAYNWI) form the KH domain. The S1 motif domain maps to 623-691 (GTIYDGTIVK…ERGKIRLSMK (69 aa)). A disordered region spans residues 695 to 745 (QETGEDLTEKLKAERAERGEPEREERSDRGDRGDRGPRRDRGERRRESSGE). The segment covering 701-745 (LTEKLKAERAERGEPEREERSDRGDRGDRGPRRDRGERRRESSGE) has biased composition (basic and acidic residues).

The protein belongs to the polyribonucleotide nucleotidyltransferase family. The cofactor is Mg(2+).

It is found in the cytoplasm. It catalyses the reaction RNA(n+1) + phosphate = RNA(n) + a ribonucleoside 5'-diphosphate. Functionally, involved in mRNA degradation. Catalyzes the phosphorolysis of single-stranded polyribonucleotides processively in the 3'- to 5'-direction. The sequence is that of Polyribonucleotide nucleotidyltransferase from Methylorubrum extorquens (strain CM4 / NCIMB 13688) (Methylobacterium extorquens).